We begin with the raw amino-acid sequence, 1243 residues long: Membrane-associated phosphatidylinositol transfer protein 1 (1243 aa).

Threonine 59, threonine 282, and threonine 287 each carry phosphothreonine. The interval 259-330 (CNTGSEGPEA…HGGGVSPQSL (72 aa)) is disordered. A compositionally biased stretch (polar residues) spans 271-283 (PGKSSTEARPGTS). Low complexity predominate over residues 299–319 (ASPDASFGKQWSSSSRSSYSS). Phosphoserine occurs at positions 300, 304, 319, 326, 329, 342, 345, 346, and 373. Phosphoserine; by CDK1 is present on serine 382. The segment covering 581–593 (AGPGSRGSSRRGS) has biased composition (low complexity). Positions 581–679 (AGPGSRGSSR…PASSEAPDGP (99 aa)) are disordered. Phosphoserine is present on residues serine 593, serine 600, and serine 621. The segment covering 643-658 (GSQNSLQVASTATSSG) has biased composition (polar residues). A DDHD domain is found at 684 to 878 (RLDFKVSGFF…VVAFILRQVI (195 aa)). At serine 895 the chain carries Phosphoserine. Residues 1206-1243 (LLRSRGPSQVDREGPGTPPTTLARGKTRSISLKLDSEE) form a disordered region. Omega-N-methylarginine occurs at positions 1210 and 1217. Residue serine 1236 is modified to Phosphoserine.

Belongs to the PtdIns transfer protein family. PI transfer class IIA subfamily. In terms of assembly, interacts with PTK2B via its C-terminus. Interacts with RHOA. Has higher affinity for the inactive, GDP-bound form of RHOA. The CDK1-phosphorylated form interacts with PLK1. Interacts with VAPB and PIK4CA. Phosphorylated on multiple sites by CDK1 at the onset of mitosis. Phosphorylation facilitates dissociation from the Golgi complex and is required for interaction with PLK1. In terms of processing, phosphorylated on threonine residues upon treatment with oleic acid. Post-translationally, phosphorylated on tyrosine residues by PTK2B. In terms of tissue distribution, detected at high levels in brain, and at lower levels in lung, kidney, spleen and liver (at protein level). Ubiquitous. Highly expressed in embryonic retina and the central nervous system.

The protein localises to the cytoplasm. It is found in the golgi apparatus. The protein resides in the golgi stack membrane. It localises to the endoplasmic reticulum membrane. Its subcellular location is the lipid droplet. The protein localises to the cleavage furrow. It is found in the midbody. The enzyme catalyses a 1,2-diacyl-sn-glycero-3-phospho-(1D-myo-inositol)(in) = a 1,2-diacyl-sn-glycero-3-phospho-(1D-myo-inositol)(out). Functionally, catalyzes the transfer of phosphatidylinositol (PI) between membranes. Binds PI. Also binds phosphatidylcholine (PC) and phosphatidic acid (PA) with the binding affinity order of PI &gt; PA &gt; PC. Regulates RHOA activity, and plays a role in cytoskeleton remodeling. Necessary for normal completion of cytokinesis. Plays a role in maintaining normal diacylglycerol levels in the Golgi apparatus. Necessary for maintaining the normal structure of the endoplasmic reticulum and the Golgi apparatus. Required for protein export from the endoplasmic reticulum and the Golgi. Binds calcium ions. In Mus musculus (Mouse), this protein is Membrane-associated phosphatidylinositol transfer protein 1 (Pitpnm1).